A 300-amino-acid chain; its full sequence is Manganese-binding lipoprotein MntA (300 aa).

Positions 1-19 are cleaved as a signal peptide; the sequence is MKKVCFSFVIMVIALIAAG. Cys-20 carries the N-palmitoyl cysteine lipid modification. Residue Cys-20 is the site of S-diacylglycerol cysteine attachment. The Mn(2+) site is built by His-68, His-130, Glu-196, and Asp-271.

This sequence belongs to the bacterial solute-binding protein 9 family.

It localises to the cell membrane. Functionally, probably part of ATP-binding cassette (ABC) transport system MntABCD involved in manganese import. Binds manganese and delivers it to the membrane permease for translocation into the cytoplasm. The polypeptide is Manganese-binding lipoprotein MntA (mntA) (Halalkalibacterium halodurans (strain ATCC BAA-125 / DSM 18197 / FERM 7344 / JCM 9153 / C-125) (Bacillus halodurans)).